A 538-amino-acid chain; its full sequence is [Pyruvate dehydrogenase [acetyl-transferring]]-phosphatase 1, mitochondrial (538 aa).

The N-terminal 71 residues, Met1–Tyr71, are a transit peptide targeting the mitochondrion. The PPM-type phosphatase domain occupies Ile109–Phe525. Mn(2+) contacts are provided by Asp144 and Gly145. An N6-acetyllysine modification is found at Lys202. Asp418 and Asp516 together coordinate Mn(2+).

Belongs to the PP2C family. In terms of assembly, heterodimer of a catalytic (PDP1) and a regulatory (PDPR) subunit. The cofactor is Mn(2+). Mg(2+) is required as a cofactor.

The protein localises to the mitochondrion. The catalysed reaction is O-phospho-L-seryl-[pyruvate dehydrogenase E1 alpha subunit] + H2O = L-seryl-[pyruvate dehydrogenase E1 alpha subunit] + phosphate. Its activity is regulated as follows. Magnesium-dependent and calcium-stimulated. PDP1 activity strongly depends on its Ca(2+)-dependent binding to the lipoyl domain of E2 subunit of component of the pyruvate dehydrogenase complex. Mitochondrial enzyme that catalyzes the dephosphorylation and concomitant reactivation of the alpha subunit of the E1 component of the pyruvate dehydrogenase complex (PDC), thereby stimulating the conversion of pyruvate into acetyl-CoA. The polypeptide is [Pyruvate dehydrogenase [acetyl-transferring]]-phosphatase 1, mitochondrial (Pdp1) (Mus musculus (Mouse)).